Consider the following 110-residue polypeptide: IQ domain-containing protein J (110 aa).

An IQ domain is found at 47–67; it reads ESKVKIIQRAWREYLQRQDPL. A disordered region spans residues 63 to 99; that stretch reads RQDPLEKRSPSPPSVSSDKLSSSVSMNTFSDSSTPVS. Over residues 76-87 the composition is skewed to low complexity; that stretch reads SVSSDKLSSSVS. Polar residues predominate over residues 88 to 99; that stretch reads MNTFSDSSTPVS.

This chain is IQ domain-containing protein J, found in Mus musculus (Mouse).